The following is a 349-amino-acid chain: ATPase GET3 (349 aa).

26-33 (KGGVGKTT) contacts ATP. D57 is an active-site residue. Residues E243 and N270 each coordinate ATP. C280 and C283 together coordinate Zn(2+).

This sequence belongs to the arsA ATPase family. Homodimer. Component of the Golgi to ER traffic (GET) complex, which is composed of GET1, GET2 and GET3. Within the complex, GET1 and GET2 form a heterotetramer which is stabilized by phosphatidylinositol binding and which binds to the GET3 homodimer. Interacts with the chloride channel protein GEF1.

The protein resides in the cytoplasm. It localises to the endoplasmic reticulum. Its subcellular location is the golgi apparatus. ATPase required for the post-translational delivery of tail-anchored (TA) proteins to the endoplasmic reticulum. Recognizes and selectively binds the transmembrane domain of TA proteins in the cytosol. This complex then targets to the endoplasmic reticulum by membrane-bound receptors GET1 and GET2, where the tail-anchored protein is released for insertion. This process is regulated by ATP binding and hydrolysis. ATP binding drives the homodimer towards the closed dimer state, facilitating recognition of newly synthesized TA membrane proteins. ATP hydrolysis is required for insertion. Subsequently, the homodimer reverts towards the open dimer state, lowering its affinity for the GET1-GET2 receptor, and returning it to the cytosol to initiate a new round of targeting. Cooperates with the HDEL receptor ERD2 to mediate the ATP-dependent retrieval of resident ER proteins that contain a C-terminal H-D-E-L retention signal from the Golgi to the ER. Involved in low-level resistance to the oxyanions arsenite and arsenate, and in heat tolerance. In Clavispora lusitaniae (strain ATCC 42720) (Yeast), this protein is ATPase GET3.